A 310-amino-acid polypeptide reads, in one-letter code: GTP-binding protein GTR1 (310 aa).

Positions 15, 18, 19, 20, 21, 35, 41, 64, 126, 129, and 166 each coordinate GTP.

The protein belongs to the GTR/RAG GTP-binding protein family. Heterodimer; with GTR2. Component of the GSE complex composed of GTR1, GTR2, SLM4, MEH1 and LTV1. Interacts with GTR2; the interaction is direct. Interacts with TOR1.

The protein localises to the vacuole membrane. The enzyme catalyses GTP + H2O = GDP + phosphate + H(+). Functionally, GTPase involved in activation of the TORC1 signaling pathway, which promotes growth and represses autophagy in nutrient-rich conditions. Also required for TORC1 inactivation during nitrogen starvation. Required for intracellular sorting of GAP1 out of the endosome. Functionally associated with the inorganic phosphate transporter PHO84, and may be involved in regulating its function or localization. This Saccharomyces cerevisiae (strain ATCC 204508 / S288c) (Baker's yeast) protein is GTP-binding protein GTR1 (GTR1).